The chain runs to 141 residues: Hemoglobin subunit alpha (141 aa).

Residues 1 to 141 (VLSANDKTNV…VSTVLTSKYR (141 aa)) form the Globin domain. Residue serine 3 is modified to Phosphoserine. Lysine 7 is modified (N6-succinyllysine). At threonine 8 the chain carries Phosphothreonine. Lysine 11 bears the N6-succinyllysine mark. Lysine 16 is modified (N6-acetyllysine; alternate). The residue at position 16 (lysine 16) is an N6-succinyllysine; alternate. Tyrosine 24 carries the post-translational modification Phosphotyrosine. Position 35 is a phosphoserine (serine 35). Position 40 is an N6-succinyllysine (lysine 40). Serine 49 is subject to Phosphoserine. Glutamine 58 serves as a coordination point for O2. Histidine 87 contacts heme b. Residue threonine 108 is modified to Phosphothreonine. Serine 124 and serine 131 each carry phosphoserine. Threonine 134 and threonine 137 each carry phosphothreonine. The residue at position 138 (serine 138) is a Phosphoserine.

It belongs to the globin family. In terms of assembly, heterotetramer of two alpha chains and two beta chains. In terms of tissue distribution, red blood cells.

In terms of biological role, involved in oxygen transport from the lung to the various peripheral tissues. Functionally, hemopressin acts as an antagonist peptide of the cannabinoid receptor CNR1. Hemopressin-binding efficiently blocks cannabinoid receptor CNR1 and subsequent signaling. This chain is Hemoglobin subunit alpha (HBA), found in Didelphis virginiana (North American opossum).